Reading from the N-terminus, the 185-residue chain is Elongation factor P (185 aa).

The protein belongs to the elongation factor P family.

It is found in the cytoplasm. Its pathway is protein biosynthesis; polypeptide chain elongation. In terms of biological role, involved in peptide bond synthesis. Stimulates efficient translation and peptide-bond synthesis on native or reconstituted 70S ribosomes in vitro. Probably functions indirectly by altering the affinity of the ribosome for aminoacyl-tRNA, thus increasing their reactivity as acceptors for peptidyl transferase. This chain is Elongation factor P, found in Petrotoga mobilis (strain DSM 10674 / SJ95).